The following is a 97-amino-acid chain: Co-chaperonin GroES (97 aa).

Belongs to the GroES chaperonin family. Heptamer of 7 subunits arranged in a ring. Interacts with the chaperonin GroEL.

The protein localises to the cytoplasm. In terms of biological role, together with the chaperonin GroEL, plays an essential role in assisting protein folding. The GroEL-GroES system forms a nano-cage that allows encapsulation of the non-native substrate proteins and provides a physical environment optimized to promote and accelerate protein folding. GroES binds to the apical surface of the GroEL ring, thereby capping the opening of the GroEL channel. The chain is Co-chaperonin GroES from Klebsiella pneumoniae (strain 342).